The sequence spans 327 residues: Thiamine-monophosphate kinase (327 aa).

Asp30, Ser45, Ser46, and Asp47 together coordinate Mg(2+). Residue His54 participates in substrate binding. Asp76 is a binding site for Mg(2+). ATP-binding positions include Tyr106, 123–124, and Arg149; that span reads GD. Asp124 is a Mg(2+) binding site. Residue Asp221 coordinates Mg(2+). Ser223 contacts ATP. Residue Asp224 participates in Mg(2+) binding. Glu268 and Phe321 together coordinate substrate.

Belongs to the thiamine-monophosphate kinase family.

It carries out the reaction thiamine phosphate + ATP = thiamine diphosphate + ADP. It participates in cofactor biosynthesis; thiamine diphosphate biosynthesis; thiamine diphosphate from thiamine phosphate: step 1/1. In terms of biological role, catalyzes the ATP-dependent phosphorylation of thiamine-monophosphate (TMP) to form thiamine-pyrophosphate (TPP), the active form of vitamin B1. In Synechococcus elongatus (strain ATCC 33912 / PCC 7942 / FACHB-805) (Anacystis nidulans R2), this protein is Thiamine-monophosphate kinase.